Consider the following 344-residue polypeptide: uncharacterized protein (344 aa).

Over residues Lys323–Arg332 the composition is skewed to basic and acidic residues. The tract at residues Lys323–Arg344 is disordered.

This is an uncharacterized protein from Bacillus anthracis.